A 672-amino-acid chain; its full sequence is Poly-beta-1,6-N-acetyl-D-glucosamine N-deacetylase (672 aa).

The N-terminal stretch at 1 to 20 is a signal peptide; the sequence is MLRNGNKYLLMLVSIIMLTA. A lipid anchor (N-palmitoyl cysteine) is attached at cysteine 21. Cysteine 21 is lipidated: S-diacylglycerol cysteine. The NodB homology domain maps to 107–349; that stretch reads KAVVLTFDDG…IQRVKDMQIS (243 aa).

This sequence belongs to the polysaccharide deacetylase family.

The protein resides in the cell outer membrane. In terms of biological role, catalyzes the N-deacetylation of poly-beta-1,6-N-acetyl-D-glucosamine (PGA), a biofilm adhesin polysaccharide. N-deacetylation promotes PGA export through the PgaA porin. The protein is Poly-beta-1,6-N-acetyl-D-glucosamine N-deacetylase (pgaB) of Escherichia coli (strain K12).